Consider the following 256-residue polypeptide: Short chain dehydrogenase adrF (256 aa).

Residues I11, D57, R119, Y151, K155, and V184 each coordinate NADP(+). The active-site Proton acceptor is Y151. The Lowers pKa of active site Tyr role is filled by K155.

It belongs to the short-chain dehydrogenases/reductases (SDR) family.

It functions in the pathway secondary metabolite biosynthesis; terpenoid biosynthesis. Short chain dehydrogenase; part of the gene cluster that mediates the biosynthesis of andrastins, meroterpenoid compounds that exhibit inhibitory activity against ras farnesyltransferase, suggesting that they could be promising leads for antitumor agents. The first step of the pathway is the synthesis of 3,5-dimethylorsellinic acid (DMOA) by the polyketide synthase adrD via condensation of one acetyl-CoA starter unit with 3 malonyl-CoA units and 2 methylations. DMAO is then converted to farnesyl-DMAO by the prenyltransferase adrG. The methyltransferase adrK catalyzes the methylation of the carboxyl group of farnesyl-DMAO to farnesyl-DMAO methyl ester which is further converted to epoxyfarnesyl-DMAO methyl ester by the FAD-dependent monooxygenase adrH. The terpene cyclase adrI then catalyzes the carbon skeletal rearrangement to generate the andrastin E, the first compound in the pathway having the andrastin scaffold, with the tetracyclic ring system. The post-cyclization tailoring enzymes adrF, adrE, adrJ, and adrA, are involved in the conversion of andrastin E into andrastin A. The short chain dehydrogenase adrF is responsible for the oxidation of the C-3 a hydroxyl group of andrastin E to yield the corresponding ketone, andrastin D. The ketoreductase adrE stereoselectively reduces the carbonyl moiety to reverse the stereochemistry of the C-3 position to yield andrastin F. The acetyltransferase adrJ is the acetyltransferase that attaches the acetyl group to the C-3 hydroxyl group of andrastin F to yield andrastin C. Finally, the cytochrome P450 monooxygenase adrA catalyzes two sequential oxidation reactions of the C-23 methyl group, to generate the corresponding alcohol andrastin B, and aldehyde andrastin A. This is Short chain dehydrogenase adrF from Penicillium roqueforti.